The following is a 95-amino-acid chain: Small ribosomal subunit protein bS6 (95 aa).

This sequence belongs to the bacterial ribosomal protein bS6 family.

Its function is as follows. Binds together with bS18 to 16S ribosomal RNA. The polypeptide is Small ribosomal subunit protein bS6 (Geobacillus sp. (strain WCH70)).